The sequence spans 274 residues: UPF0173 metal-dependent hydrolase AnaeK_1127 (274 aa).

The protein belongs to the UPF0173 family.

The sequence is that of UPF0173 metal-dependent hydrolase AnaeK_1127 from Anaeromyxobacter sp. (strain K).